The sequence spans 256 residues: Glutamate racemase (256 aa).

Substrate-binding positions include aspartate 12–serine 13 and tyrosine 44–glycine 45. Cysteine 75 (proton donor/acceptor) is an active-site residue. Substrate is bound at residue asparagine 76–threonine 77. The active-site Proton donor/acceptor is the cysteine 186. Threonine 187–histidine 188 lines the substrate pocket.

It belongs to the aspartate/glutamate racemases family.

The catalysed reaction is L-glutamate = D-glutamate. It participates in cell wall biogenesis; peptidoglycan biosynthesis. Its function is as follows. Provides the (R)-glutamate required for cell wall biosynthesis. The sequence is that of Glutamate racemase from Clostridium acetobutylicum (strain ATCC 824 / DSM 792 / JCM 1419 / IAM 19013 / LMG 5710 / NBRC 13948 / NRRL B-527 / VKM B-1787 / 2291 / W).